Consider the following 271-residue polypeptide: Peroxisomal biogenesis factor 2 (271 aa).

The Peroxisomal matrix portion of the chain corresponds to 1-2; it reads MS. The helical transmembrane segment at 3–29 threads the bilayer; sequence RVAQLDSIALDKELYGQFWSEFNAAFN. The Cytoplasmic segment spans residues 30-33; that stretch reads TSEH. Residues 34-60 traverse the membrane as a helical segment; that stretch reads KEEWELALNTVVFMCATRFLPHYGSSC. Residues 61-77 lie on the Peroxisomal matrix side of the membrane; the sequence is TYGSALSGVVFQCRKRT. A helical transmembrane segment spans residues 78 to 97; sequence LYVVTVLAGYVWKKITHIIF. At 98 to 101 the chain is on the cytoplasmic side; sequence NGPH. A helical transmembrane segment spans residues 102-133; sequence CGNQMMWLKLYKWVNLLYHGCDVTNFLRFLAA. Over 134–175 the chain is Peroxisomal matrix; sequence EGPNARAFLSPLYRAFNVHSTRLIRDGSAIASEFYSNSVFAG. Residues 176 to 197 traverse the membrane as a helical segment; that stretch reads LEYQNRQLLWNALLELFSNTLL. Over 198 to 271 the chain is Cytoplasmic; it reads TKRGLLTFVK…SGRLTASPVY (74 aa). Cys-222, Cys-225, Cys-237, Cys-238, Cys-243, Cys-246, Cys-256, and Cys-259 together coordinate Zn(2+). Residues 222–259 form an RING-type zinc finger; that stretch reads CPRCGGFPTNPYQIACCRANYCYVCVVKALEWSMCDAC.

The protein belongs to the pex2/pex10/pex12 family. As to quaternary structure, component of the PEX2-PEX10-PEX12 retrotranslocation channel, composed of PEX2, PEX10 and PEX12.

The protein localises to the peroxisome membrane. The enzyme catalyses [E2 ubiquitin-conjugating enzyme]-S-ubiquitinyl-L-cysteine + [acceptor protein]-L-cysteine = [E2 ubiquitin-conjugating enzyme]-L-cysteine + [acceptor protein]-S-ubiquitinyl-L-cysteine.. Its pathway is protein modification; protein ubiquitination. Functionally, E3 ubiquitin-protein ligase component of a retrotranslocation channel required for peroxisome organization by mediating export of the PEX5 receptor from peroxisomes to the cytosol, thereby promoting PEX5 recycling. The retrotranslocation channel is composed of PEX2, PEX10 and PEX12; each subunit contributing transmembrane segments that coassemble into an open channel that specifically allows the passage of PEX5 through the peroxisomal membrane. PEX2 also regulates peroxisome organization by acting as a E3 ubiquitin-protein ligase. PEX2 ubiquitinates PEX5 during its passage through the retrotranslocation channel: catalyzes monoubiquitination of PEX5 at 'Cys-6', a modification that acts as a signal for PEX5 extraction into the cytosol. The chain is Peroxisomal biogenesis factor 2 from Saccharomyces cerevisiae (strain ATCC 204508 / S288c) (Baker's yeast).